A 441-amino-acid polypeptide reads, in one-letter code: MSALRHVVCALSGGVDSAVAALLLRRRGYQVTGVFMKNWDSLDEQGICAADKDCEDAYKVCQILDIPFHQVSYVKEYWNDVFSDFLNEYEKGRTPNPDISCNKHIKFSCFHHYAVDNLGADAVATGHYARTSLEDEEVFEQKHTKRPDGLFRNRFEVRNPVKLLQAADSFKDQTFFLSQVSQDALRRTIFPLGELTKDFVKKIAAENRLHHVLQKKESMGICFIGKRNLEHFLLQVSVSDVSGGLLWAGAPVVMKPVFQYLQPRPGKFISIEDNRVLGTHKGWFLYTLGQRAKISGLSEPWYVVEKDGTKGDVLVAPRVDHPALYRDLLRTNRVHWIAEEPPAALVRDKMMECHFRFRHQMALVPCVLTLNQDGTVWVTAVKAVRGLALGQFAVFYKGEECLGSGKILRLGPSAYTLQKGKNRTRVAPEVSSDSPGLHPTS.

ATP contacts are provided by residues 10–17 (ALSGGVDS) and methionine 36. The tract at residues 96-98 (NPD) is interaction with target base in tRNA. The active-site Nucleophile is cysteine 101. A disulfide bridge links cysteine 101 with cysteine 222. Residue glycine 126 coordinates ATP. The segment at 171–173 (KDQ) is interaction with tRNA. Cysteine 222 serves as the catalytic Cysteine persulfide intermediate. The segment at 358–359 (RH) is interaction with tRNA. The disordered stretch occupies residues 421–441 (KNRTRVAPEVSSDSPGLHPTS). Residues 431-441 (SSDSPGLHPTS) are compositionally biased toward polar residues.

It belongs to the MnmA/TRMU family.

It is found in the mitochondrion. The enzyme catalyses 5-taurinomethyluridine(34) in tRNA + S-sulfanyl-L-cysteinyl-[protein] + AH2 + ATP = 5-taurinomethyl-2-thiouridine(34) in tRNA + L-cysteinyl-[protein] + A + AMP + diphosphate + H(+). In terms of biological role, catalyzes the 2-thiolation of uridine at the wobble position (U34) of mitochondrial tRNA(Lys), tRNA(Glu) and tRNA(Gln). Required for the formation of 5-taurinomethyl-2-thiouridine (tm5s2U) of mitochondrial tRNA(Lys), tRNA(Glu), and tRNA(Gln) at the wobble position. ATP is required to activate the C2 atom of the wobble base. The polypeptide is Mitochondrial tRNA-specific 2-thiouridylase 1 (Trmu) (Rattus norvegicus (Rat)).